A 936-amino-acid polypeptide reads, in one-letter code: Isoleucine--tRNA ligase (936 aa).

A 'HIGH' region motif is present at residues 58–68 (PYANGRAHLGT). Glu-561 provides a ligand contact to L-isoleucyl-5'-AMP. The 'KMSKS' region signature appears at 602–606 (KMSKS). Lys-605 lines the ATP pocket. Zn(2+) is bound by residues Cys-899, Cys-902, Cys-919, and Cys-922.

It belongs to the class-I aminoacyl-tRNA synthetase family. IleS type 1 subfamily. Monomer. Requires Zn(2+) as cofactor.

It localises to the cytoplasm. The enzyme catalyses tRNA(Ile) + L-isoleucine + ATP = L-isoleucyl-tRNA(Ile) + AMP + diphosphate. Catalyzes the attachment of isoleucine to tRNA(Ile). As IleRS can inadvertently accommodate and process structurally similar amino acids such as valine, to avoid such errors it has two additional distinct tRNA(Ile)-dependent editing activities. One activity is designated as 'pretransfer' editing and involves the hydrolysis of activated Val-AMP. The other activity is designated 'posttransfer' editing and involves deacylation of mischarged Val-tRNA(Ile). The polypeptide is Isoleucine--tRNA ligase (Coxiella burnetii (strain RSA 331 / Henzerling II)).